Reading from the N-terminus, the 273-residue chain is Multidrug-efflux transporter 2 regulator (273 aa).

In terms of domain architecture, HTH merR-type spans 8–77 (YFTTGEFSKL…LKEIKCLIKG (70 aa)). Positions 11–30 (TGEFSKLCRVKKQTLFHYDE) form a DNA-binding region, H-T-H motif.

Its function is as follows. Activates transcription of the blt gene in response to structurally dissimilar drugs. The protein is Multidrug-efflux transporter 2 regulator (bltR) of Bacillus subtilis (strain 168).